The following is a 1783-amino-acid chain: Collagen alpha-1(XXVII) chain A (1783 aa).

A signal peptide spans 1-35; the sequence is MNLATRRRVRRTSRLVAKRALLLCILLYCTSFGFT. Residues 73 to 235 form the Laminin G-like domain; the sequence is TTRARVTTPT…NICSAIRRQC (163 aa). 5 disordered regions span residues 288–312, 327–524, 553–744, 772–1461, and 1512–1546; these read SSSV…LALM, HKPS…PRTP, VGAP…APGP, PGNM…GDIG, and GNPG…LPGP. The span at 403–415 shows a compositional bias: low complexity; it reads KPTSVPKPNPTKN. Residues 436-447 are compositionally biased toward pro residues; the sequence is LPAPKPTVPKRP. Over residues 462–494 the composition is skewed to polar residues; it reads HTTPLTPKSTLAPNSTSKKPLPTLKSTSFTTAA. A triple-helical region region spans residues 553–1547; that stretch reads VGAPGLKGDQ…RGPPGLPGPP (995 aa). Positions 554-608 constitute a Collagen-like 1 domain; sequence GAPGLKGDQGESGLPGPPGKPGQPGMRGPRGPPGPHGKPGRPGPTGLKGKKGDPG. Low complexity-rich tracts occupy residues 622-633, 651-661, 735-744, 817-829, and 861-870; these read VGLPGPVGLVGV, EPGEQGPVGEA, EPGVIGAPGP, PGPQ…IGPS, and ARGLPGPRGA. Collagen-like domains are found at residues 818–873 and 845–902; these read GPQG…AAGR and GKPG…GALG. Residues 926–935 are compositionally biased toward gly residues; it reads GFIGPGGEAG. Pro residues predominate over residues 967–976; it reads GGPPGPPGSP. Composition is skewed to low complexity over residues 978 to 988 and 1098 to 1129; these read SPGSRGPIGIR and SIGL…AGPD. A Collagen-like 4 domain is found at 986 to 1043; the sequence is GIRGPKGRRGPRGPDGVPGEIGTEGKKGPDGPPGKIGFPGHAGKIGESGEVGPKGFPG. Composition is skewed to basic and acidic residues over residues 1131 to 1158, 1170 to 1182, and 1257 to 1267; these read TKGE…KDGP, PEGK…ERGK, and AKGEQGDDGKV. The 58-residue stretch at 1269–1326 folds into the Collagen-like 5 domain; the sequence is GPTGAPGLRGPVGKRGDRGEPGDPGYVGQQGVDGLRGKPGAPGLPGDPGPRGTQGPKG. 2 stretches are compositionally biased toward low complexity: residues 1334–1349 and 1396–1409; these read KGKQ…RGSP and LPGK…VGVI. Collagen-like domains are found at residues 1446 to 1503 and 1497 to 1549; these read GPQG…GLAG and GRGG…PPGI. The span at 1537-1546 shows a compositional bias: pro residues; the sequence is PRGPPGLPGP. A propeptide spans 1551–1783 (C-terminal propeptide); that stretch reads LAMNQDFGLG…HLEVGPVCFL (233 aa). Residues 1589 to 1783 enclose the Fibrillar collagen NC1 domain; it reads PEILRTLDYL…HLEVGPVCFL (195 aa). 3 cysteine pairs are disulfide-bonded: Cys-1619/Cys-1651, Cys-1660/Cys-1781, and Cys-1696/Cys-1734. Asp-1637, Asn-1639, Cys-1642, and Asp-1645 together coordinate Ca(2+). A glycan (N-linked (GlcNAc...) asparagine) is linked at Asn-1698.

It belongs to the fibrillar collagen family. In terms of tissue distribution, expressed dynamically in the notochord from late epiboly, spreading to the anterior notochord by 24 hpf, and then throughout the notochord by 30 hpf. Subsequently, notochordal expression becomes restricted to the distal tip of the tail by 48 hpf and is no longer detectable by 72 hpf. Also expressed throughout the floor plate and hypochord at 24 hpf, and in forming head cartilages and the first forming tooth.

It localises to the secreted. It is found in the extracellular space. The protein localises to the extracellular matrix. In terms of biological role, may play a role during the calcification of cartilage and the transition of cartilage to bone. Together with col27a1b, plays a role in development of the notochord and axial skeleton. The polypeptide is Collagen alpha-1(XXVII) chain A (Danio rerio (Zebrafish)).